The sequence spans 471 residues: Mannose-1-phosphate guanylyltransferase (471 aa).

The protein belongs to the mannose-6-phosphate isomerase type 2 family.

It catalyses the reaction alpha-D-mannose 1-phosphate + GTP + H(+) = GDP-alpha-D-mannose + diphosphate. It functions in the pathway nucleotide-sugar biosynthesis; GDP-alpha-D-mannose biosynthesis; GDP-alpha-D-mannose from alpha-D-mannose 1-phosphate (GTP route): step 1/1. It participates in bacterial outer membrane biogenesis; LPS O-antigen biosynthesis. Functionally, involved in GDP-mannose biosynthesis which serves as the activated sugar nucleotide precursor for mannose residues in cell surface polysaccharides. This enzyme participates in synthesis of the LPS O9 antigen. This chain is Mannose-1-phosphate guanylyltransferase (manC), found in Escherichia coli.